Consider the following 299-residue polypeptide: Very long chain fatty acid elongase 5 (299 aa).

M1 carries the N-acetylmethionine modification. The next 7 helical transmembrane spans lie at 26-46 (WFLLDNYIPTFICSVIYLLIV), 64-84 (ILVVYNLGLTLLSLYMFCELV), 112-132 (VLWWYYFSKLIEFMDTFFFIL), 150-170 (MLNIWWFVMNWVPCGHSYFGA), 172-192 (LNSFIHVLMYSYYGLSSVLSM), 205-225 (GQLLQSVLTIIQTSCGVIWPC), and 226-246 (TFPLGWLYFQIGYMISLIALF). Residues 262 to 299 (RKDHLKDHQNGSKAAVNGHTNSFSPLENNVKPRKLRKD) form a disordered region. Over residues 279-288 (GHTNSFSPLE) the composition is skewed to polar residues. Residue S285 is modified to Phosphoserine.

It belongs to the ELO family. ELOVL5 subfamily. As to quaternary structure, interacts with TECR.

It is found in the endoplasmic reticulum membrane. The protein localises to the cell projection. Its subcellular location is the dendrite. It carries out the reaction a very-long-chain acyl-CoA + malonyl-CoA + H(+) = a very-long-chain 3-oxoacyl-CoA + CO2 + CoA. The enzyme catalyses (6Z,9Z,12Z)-octadecatrienoyl-CoA + malonyl-CoA + H(+) = (8Z,11Z,14Z)-3-oxoeicosatrienoyl-CoA + CO2 + CoA. It catalyses the reaction (9Z,12Z,15Z)-octadecatrienoyl-CoA + malonyl-CoA + H(+) = (11Z,14Z,17Z)-3-oxoeicosatrienoyl-CoA + CO2 + CoA. The catalysed reaction is (9Z)-hexadecenoyl-CoA + malonyl-CoA + H(+) = 3-oxo-(11Z)-octadecenoyl-CoA + CO2 + CoA. It carries out the reaction (9Z)-octadecenoyl-CoA + malonyl-CoA + H(+) = 3-oxo-(11Z)-eicosenoyl-CoA + CO2 + CoA. The enzyme catalyses (11Z)-octadecenoyl-CoA + malonyl-CoA + H(+) = 3-oxo-(13Z)-eicosenoyl-CoA + CO2 + CoA. It catalyses the reaction (9Z,12Z)-octadecadienoyl-CoA + malonyl-CoA + H(+) = (11Z,14Z)-3-oxoicosa-11,14-dienoyl-CoA + CO2 + CoA. The catalysed reaction is (6Z,9Z,12Z,15Z)-octadecatetraenoyl-CoA + malonyl-CoA + H(+) = (8Z,11Z,14Z,17Z)-3-oxoicosatetraenoyl-CoA + CO2 + CoA. It carries out the reaction (5Z,8Z,11Z,14Z)-eicosatetraenoyl-CoA + malonyl-CoA + H(+) = (7Z,10Z,13Z,16Z)-3-oxodocosatetraenoyl-CoA + CO2 + CoA. The enzyme catalyses (5Z,8Z,11Z,14Z,17Z)-eicosapentaenoyl-CoA + malonyl-CoA + H(+) = 3-oxo-(7Z,10Z,13Z,16Z,19Z)-docosapentaenoyl-CoA + CO2 + CoA. Its pathway is lipid metabolism; polyunsaturated fatty acid biosynthesis. Catalyzes the first and rate-limiting reaction of the four reactions that constitute the long-chain fatty acids elongation cycle. This endoplasmic reticulum-bound enzymatic process allows the addition of 2 carbons to the chain of long- and very long-chain fatty acids (VLCFAs) per cycle. Condensing enzyme that acts specifically toward polyunsaturated acyl-CoA with the higher activity toward C18:3(n-6) acyl-CoA. May participate in the production of monounsaturated and of polyunsaturated VLCFAs of different chain lengths that are involved in multiple biological processes as precursors of membrane lipids and lipid mediators. In conditions where the essential linoleic and alpha linoleic fatty acids are lacking it is also involved in the synthesis of Mead acid from oleic acid. This Pongo abelii (Sumatran orangutan) protein is Very long chain fatty acid elongase 5.